We begin with the raw amino-acid sequence, 580 residues long: Isochorismate synthase, chloroplastic (580 aa).

The N-terminal 91 residues, Met1 to Val91, are a transit peptide targeting the chloroplast.

The protein belongs to the isochorismate synthase family. Mg(2+) is required as a cofactor.

It localises to the plastid. Its subcellular location is the chloroplast. The enzyme catalyses chorismate = isochorismate. Not inhibited by Tyr, Phe or Trp. Functionally, involved in the synthesis of o-succinylbenzoic acid, 2,3-dihydroxybenzoic acid and salicylic acid (SA). In Catharanthus roseus (Madagascar periwinkle), this protein is Isochorismate synthase, chloroplastic.